Reading from the N-terminus, the 278-residue chain is Complement component 1 Q subcomponent-binding protein, mitochondrial (278 aa).

The transit peptide at 1-70 (MLPLLRCVPR…PVPCACGCGA (70 aa)) directs the protein to the mitochondrion. The tract at residues 73–90 (TEGDKAFVEFLTDEIKEE) is C1q binding. 2 positions are modified to N6-acetyllysine: K88 and K91. The disordered stretch occupies residues 133–162 (NNSIPPTFDGEEEPSQGQKAEEQEPERTST). The segment at 165-209 (FVVEVTKTDGKKTLVLDCHYPEDEIGHEDEAESDIFSIKEVSFQA) is interaction with MAVS. Position 184 is a phosphotyrosine (Y184). Phosphoserine is present on residues S197 and S201. A Phosphothreonine modification is found at T210.

The protein belongs to the MAM33 family. Homotrimer; three monomers form a donut-shaped structure with an unusually asymmetric charge distribution on the surface. Interacts with CDK13, HRK, VTN, NFYB, ADRA1B, FOXC1, DDX21, DDX50, NCL, SRSF1 and SRSF9. Interacts with CD93; the association may represent a cell surface C1q receptor. Interacts with KRT1; the association represents a cell surface kininogen receptor. Interacts with CD209; the interaction is indicative for a C1q:C1QBP:CD209 signaling complex. Interacts with FBL and RRP1; the respective interactions with C1QBP are competitive. Probably associates with the mitoribosome. Interacts with MAVS; the interaction occurs upon viral transfection. Interacts with PPIF. Interacts with U2AF1L4. Interacts with PLEKHN1. Interacts with VGF-derived peptide TLQP-21. Interacts with MRE11 and RAD50; forming the MRC (MRE11-RAD50-C1QBP) complex that inhibits the activity of MRE11. As to expression, ubiquitous.

Its subcellular location is the mitochondrion matrix. The protein localises to the nucleus. The protein resides in the cell membrane. It is found in the secreted. It localises to the cytoplasm. Its subcellular location is the nucleolus. Functionally, is believed to be a multifunctional and multicompartmental protein involved in inflammation and infection processes, ribosome biogenesis, protein synthesis in mitochondria, regulation of apoptosis, transcriptional regulation and pre-mRNA splicing. At the cell surface is thought to act as an endothelial receptor for plasma proteins of the complement and kallikrein-kinin cascades. Putative receptor for C1q; specifically binds to the globular 'heads' of C1q thus inhibiting C1; may perform the receptor function through a complex with C1qR/CD93. In complex with cytokeratin-1/KRT1 is a high affinity receptor for kininogen-1/HMWK. Can also bind other plasma proteins, such as coagulation factor XII leading to its autoactivation. May function to bind initially fluid kininogen-1 to the cell membrane. The secreted form may enhance both extrinsic and intrinsic coagulation pathways. It is postulated that the cell surface form requires docking with transmembrane proteins for downstream signaling which might be specific for a cell-type or response. By acting as C1q receptor is involved in chemotaxis of immature dendritic cells and neutrophils and is proposed to signal through CD209/DC-SIGN on immature dendritic cells, through integrin alpha-4/beta-1 during trophoblast invasion of the decidua, and through integrin beta-1 during endothelial cell adhesion and spreading. Signaling involved in inhibition of innate immune response is implicating the PI3K-AKT/PKB pathway. Required for protein synthesis in mitochondria. In mitochondrial translation may be involved in formation of functional 55S mitoribosomes; the function seems to involve its RNA-binding activity. Acts as a RNA modification reader, which specifically recognizes and binds mitochondrial RNAs modified by C5-methylcytosine (m5C) in response to stress, and promotes recruitment of the mitochondrial degradosome complex, leading to their degradation. May be involved in the nucleolar ribosome maturation process; the function may involve the exchange of FBL for RRP1 in the association with pre-ribosome particles. Involved in regulation of RNA splicing by inhibiting the RNA-binding capacity of SRSF1 and its phosphorylation. Is required for the nuclear translocation of splicing factor U2AF1L4. Involved in regulation of CDKN2A- and HRK-mediated apoptosis. May be involved in regulation of FOXC1 transcriptional activity and NFY/CCAAT-binding factor complex-mediated transcription. May play a role in antibacterial defense. Acts as a regulator of DNA repair via homologous recombination by inhibiting the activity of MRE11: interacts with unphosphorylated MRE11 and RAD50 in absence of DNA damage, preventing formation and activity of the MRN complex. Following DNA damage, dissociates from phosphorylated MRE11, allowing formation of the MRN complex. This chain is Complement component 1 Q subcomponent-binding protein, mitochondrial (C1qbp), found in Mus musculus (Mouse).